The sequence spans 86 residues: Small ribosomal subunit protein uS15 (86 aa).

The protein belongs to the universal ribosomal protein uS15 family. In terms of assembly, part of the 30S ribosomal subunit. Forms a bridge to the 50S subunit in the 70S ribosome, contacting the 23S rRNA.

Functionally, one of the primary rRNA binding proteins, it binds directly to 16S rRNA where it helps nucleate assembly of the platform of the 30S subunit by binding and bridging several RNA helices of the 16S rRNA. Forms an intersubunit bridge (bridge B4) with the 23S rRNA of the 50S subunit in the ribosome. The polypeptide is Small ribosomal subunit protein uS15 (Mycoplasma genitalium (strain ATCC 33530 / DSM 19775 / NCTC 10195 / G37) (Mycoplasmoides genitalium)).